Reading from the N-terminus, the 481-residue chain is Rho GTPase-activating protein 15 (481 aa).

Ser-51, Ser-111, Ser-204, Ser-207, and Ser-249 each carry phosphoserine. Residues 87-197 (MVEKEGYLQK…WFQAIKNAID (111 aa)) enclose the PH domain. Residues 287–476 (SHLHTVCERE…FMLTEYDKIF (190 aa)) form the Rho-GAP domain.

Its subcellular location is the cytoplasm. It localises to the membrane. GTPase activator for the Rho-type GTPases by converting them to an inactive GDP-bound state. Has activity toward RAC1. Overexpression results in an increase in actin stress fibers and cell contraction. This is Rho GTPase-activating protein 15 (Arhgap15) from Mus musculus (Mouse).